Here is a 1736-residue protein sequence, read N- to C-terminus: Hybrid signal transduction histidine kinase I (1736 aa).

The segment covering 143-161 (HNINNNQNNQNSVNINSSN) has biased composition (low complexity). The interval 143–171 (HNINNNQNNQNSVNINSSNKGQYNRPEPS) is disordered. The region spanning 234-286 (FEYPLRINRKNDNLVRYIQLKGEIIKKDDKVFKVLGVCHDFSEIQEAKDKLEE) is the PAC domain. One can recognise a PAS domain in the interval 287–358 (ESKFVEALIG…QINLEKSGTP (72 aa)). A disordered region spans residues 378 to 469 (TSNQQQSSLS…NTTNGIGGAT (92 aa)). Positions 379–389 (SNQQQSSLSKS) are enriched in low complexity. Over residues 392 to 412 (PRSQSNCSNGNKSQNRLSKNY) the composition is skewed to polar residues. Residues 413–469 (STTTTTTNNNNNNNNNNNNNNNNNNNNNSISQQQQTQVSTQQTQQQQNTTNGIGGAT) show a composition bias toward low complexity. A Histidine kinase domain is found at 556 to 908 (NISHELLSPM…TFHFILSIKS (353 aa)). H559 is modified (phosphohistidine; by autocatalysis). Disordered stretches follow at residues 711-821 (NSKT…KREK), 952-971 (TKKV…TNYG), 1080-1124 (NGNN…KQHS), 1157-1258 (PPKS…ILSP), 1277-1301 (SLTP…INNG), 1330-1393 (ASSP…NLSS), and 1419-1520 (SNNL…PPIL). 2 stretches are compositionally biased toward acidic residues: residues 725–735 (SIDGDYDDQDN) and 758–789 (ELDE…DDDT). 3 stretches are compositionally biased toward low complexity: residues 790-807 (SSNT…FHNN), 961-971 (DNGNNDSTNYG), and 1080-1096 (NGNN…NNNI). A compositionally biased stretch (polar residues) spans 1097–1117 (QTPNGLNNSRGSSLISTPSTK). Low complexity-rich tracts occupy residues 1186–1195 (SSPPINSSSS) and 1202–1258 (TNGS…ILSP). Residues 1330 to 1339 (ASSPKQSQRG) show a composition bias toward polar residues. 4 stretches are compositionally biased toward low complexity: residues 1340 to 1376 (YSPK…QQQQ), 1425 to 1475 (NNNN…STPE), 1482 to 1492 (SPRSNNNNNCS), and 1506 to 1520 (SSTI…PPIL). Residues 1551-1674 (KVLVAEDNTM…LLYEVINTQI (124 aa)) form the Response regulatory domain. D1605 is subject to 4-aspartylphosphate. The segment covering 1695–1722 (NNNNNNTNNNNNNNNSSNPVNNNNSNSI) has biased composition (low complexity). The interval 1695–1736 (NNNNNNTNNNNNNNNSSNPVNNNNSNSIDATQQELNNEKIRI) is disordered.

Post-translationally, activation probably requires transfer of a phosphate group between a histidine in the kinase core (transmitter) domain and an aspartate of the receiver domain.

It carries out the reaction ATP + protein L-histidine = ADP + protein N-phospho-L-histidine.. In terms of biological role, acts as a receptor histidine kinase for a signal transduction pathway. This protein undergoes an ATP-dependent autophosphorylation at a conserved histidine residue in the kinase core, and a phosphoryl group is then transferred to a conserved aspartate residue in the receiver domain. This Dictyostelium discoideum (Social amoeba) protein is Hybrid signal transduction histidine kinase I (dhkI-1).